We begin with the raw amino-acid sequence, 156 residues long: WASQVSENRPVCKAVIQGKQLEGLVDTGADVSIIALNQWPKNWPKQKTVTGLVGIVTASEVYQSTEILHCLGPHNQESTVQPMITSIPLNLWGRDLLQQWGAEITMTATLYSPMSQKIMTKMGYIPGKGLGKNEDGIKVPIEAKINHGREGTGYPF.

Residues 21 to 96 (LEGLVDTGAD…IPLNLWGRDL (76 aa)) enclose the Peptidase A2 domain. Asp26 is an active-site residue. The 46-residue stretch at 111–156 (YSPMSQKIMTKMGYIPGKGLGKNEDGIKVPIEAKINHGREGTGYPF) folds into the G-patch domain.

It belongs to the peptidase A2 family. HERV class-II K(HML-2) subfamily. Active as a homodimer. Post-translationally, autoproteolytically processed at the N-terminus. Expected C-terminal autoprocessing not detected. The sequence shown is that of the processed Pro protein.

The enzyme catalyses Processing at the authentic HIV-1 PR recognition site and release of the mature p17 matrix and the p24 capsid protein, as a result of the cleavage of the -SQNY-|-PIVQ- cleavage site.. Its function is as follows. Retroviral proteases have roles in the processing of the primary translation products and the maturation of the viral particle. Endogenous Pro proteins may have kept, lost or modified their original function during evolution. This is Endogenous retrovirus group K member 18 Pro protein (ERVK-18) from Homo sapiens (Human).